The primary structure comprises 331 residues: Type 2 lactosamine alpha-2,3-sialyltransferase (331 aa).

Over 1–4 (MRGY) the chain is Cytoplasmic. Residues 5-25 (LVAIFLSAVFLYYVLHCILWG) form a helical; Signal-anchor for type II membrane protein membrane-spanning segment. Topologically, residues 26-331 (TNVYWVAPVE…KNLVINLTQD (306 aa)) are lumenal. Residues Asn-129, Asn-181, Asn-282, Asn-295, Asn-308, and Asn-327 are each glycosylated (N-linked (GlcNAc...) asparagine).

The protein belongs to the glycosyltransferase 29 family.

The protein resides in the golgi apparatus membrane. It catalyses the reaction a neolactoside nLc4Cer(d18:1(4E)) + CMP-N-acetyl-beta-neuraminate = a neolactoside IV(3)-alpha-NeuAc-nLc4Cer(d18:1(4E)) + CMP + H(+). The catalysed reaction is a beta-D-galactosyl-(1-&gt;4)-N-acetyl-beta-D-glucosaminyl derivative + CMP-N-acetyl-beta-neuraminate = an N-acetyl-alpha-neuraminyl-(2-&gt;3)-beta-D-galactosyl-(1-&gt;4)-N-acetyl-beta-D-glucosaminyl derivative + CMP + H(+). The enzyme catalyses a neolactoside nLc6Cer(d18:1(4E)) + CMP-N-acetyl-beta-neuraminate = a neolactoside VI(3)-alpha-NeuNAc-nLc6Cer(d18:1(4E)) + CMP + H(+). Its function is as follows. Transfers the sialyl residue from CMP-N-acetyl-beta-neuraminate to the terminal galactose residue on sugar chains of glycoproteins and glycolipids. It's alpha-2,3-sialyltransferase activity is specific toward type II glycan chains (Galbeta1-4GlcNAc) on glycoproteins and glycolipids such as neolactosides nLc4Cer and nLc6Cer, whose sialyl-products serve as precursors for the Lewis X antigen. Critically involved in the synthesis of functional selectin ligands needed for neutrophil recruitment during inflammation and lymphocyte homing to the lymph nodes. The sequence is that of Type 2 lactosamine alpha-2,3-sialyltransferase (ST3GAL6) from Pan troglodytes (Chimpanzee).